Consider the following 125-residue polypeptide: Lymphocyte antigen 6 complex locus protein G6c (125 aa).

Residues M1 to A18 form the signal peptide. The region spanning I20–V111 is the UPAR/Ly6 domain. 3 disulfide bridges follow: C22–C47, C25–C33, and C39–C65. N-linked (GlcNAc...) asparagine glycosylation is present at N88. C92 and C97 are disulfide-bonded. S99 is lipidated: GPI-anchor amidated serine. The propeptide at P100 to H125 is removed in mature form.

N-glycosylated.

Its subcellular location is the cell membrane. This Bos taurus (Bovine) protein is Lymphocyte antigen 6 complex locus protein G6c (LY6G6C).